The chain runs to 562 residues: Arginine--tRNA ligase (562 aa).

The 'HIGH' region motif lies at Ala129 to His139.

Belongs to the class-I aminoacyl-tRNA synthetase family. As to quaternary structure, monomer.

The protein resides in the cytoplasm. It catalyses the reaction tRNA(Arg) + L-arginine + ATP = L-arginyl-tRNA(Arg) + AMP + diphosphate. The sequence is that of Arginine--tRNA ligase from Xanthomonas axonopodis pv. citri (strain 306).